The sequence spans 260 residues: 3'-5' ssDNA/RNA exonuclease TatD (260 aa).

3 residues coordinate a divalent metal cation: Glu92, His128, and His153.

Belongs to the metallo-dependent hydrolases superfamily. TatD-type hydrolase family. TatD subfamily. In terms of assembly, monomer. Mg(2+) is required as a cofactor.

It is found in the cytoplasm. Its function is as follows. 3'-5' exonuclease that prefers single-stranded DNA and RNA. May play a role in the H(2)O(2)-induced DNA damage repair. This is 3'-5' ssDNA/RNA exonuclease TatD from Pectobacterium atrosepticum (strain SCRI 1043 / ATCC BAA-672) (Erwinia carotovora subsp. atroseptica).